The chain runs to 268 residues: Glutamate racemase (268 aa).

Residues 10 to 11 and 42 to 43 contribute to the substrate site; these read DS and YG. Cysteine 73 acts as the Proton donor/acceptor in catalysis. Substrate is bound at residue 74-75; the sequence is NT. Cysteine 184 serves as the catalytic Proton donor/acceptor. 185–186 is a binding site for substrate; the sequence is TH.

This sequence belongs to the aspartate/glutamate racemases family.

The catalysed reaction is L-glutamate = D-glutamate. It participates in cell wall biogenesis; peptidoglycan biosynthesis. Functionally, provides the (R)-glutamate required for cell wall biosynthesis. The chain is Glutamate racemase from Carnobacterium sp. (strain St2).